The chain runs to 530 residues: Cytochrome P450 monooxygenase apf7 (530 aa).

The chain crosses the membrane as a helical span at residues 6–26 (VSPVSIWVFVIYAVTIIIAIY). N-linked (GlcNAc...) asparagine glycosylation is present at asparagine 85. Cysteine 464 lines the heme pocket.

Belongs to the cytochrome P450 family. The cofactor is heme.

It localises to the membrane. It participates in secondary metabolite biosynthesis. Its function is as follows. Cytochrome P450 monooxygenase; part of the gene cluster that mediates the biosynthesis of the cyclic tetrapeptide apicidin F (APF). The non-ribosomal peptide synthetase apf1 incorporates four different amino acids to produce apicidin F: L-phenylalanine, D-pipecolic acid (D-pip), N-methoxy-L-tryptophan and L-2-aminooctanedioic acid. L-Phenylalanine is the only proteinogenic amino acid directly used by apf1. The 3 other apf1 substrates are non-proteinogenic and have to be modified by other enzymes of the cluster. Lysine is converted to delta-1-pyrroline-5-carboxylate (P5C) which is reduced to L-pipecolic acid (L-pip) by apf3. L-pip is epimerized to D-pip, probably by apf1 activity, prior to incorporation. L-Tryptophan is N-oxidyzed by one of the cytochrome P450 monooxygenases (apf7 or apf8), and further methylated at the hydroxy group by the O-methyltransferase apf6 to yield N-methoxy-L-tryptophan. The synthesis of the fourth apf1 substrate is more complex. The fatty acid synthase apf5 is involved in the synthesis of the octanoic acid backbone of L-2-aminooctanedioic acid by fixing one acetyl-CoA unit and three malonyl-CoA units. Then one of the cytochrome P450 monooxygenases (apf7 or apf8) may oxidize this backbone to 2-oxooctanoic acid. The aminotransferase apf4 is predicted to catalyze the exchange of the keto group with an amino group. The next step would be the oxidation of 2-aminooctanoic acid by one of the cytochrome P450 monooxygenases (apf7 or apf8). The last step is the oxidation of 2-amino-8-hydroxyoctanoic acid to 2-aminooctanedioic acid is catalyzed by the FAD-dependent monooxygenase apf9. In Gibberella fujikuroi (strain CBS 195.34 / IMI 58289 / NRRL A-6831) (Bakanae and foot rot disease fungus), this protein is Cytochrome P450 monooxygenase apf7.